A 392-amino-acid polypeptide reads, in one-letter code: tRNA (guanine-N(7)-)-methyltransferase (392 aa).

Glutamate 123, glutamate 148, and aspartate 175 together coordinate S-adenosyl-L-methionine. Substrate is bound by residues lysine 201 and aspartate 231.

It belongs to the class I-like SAM-binding methyltransferase superfamily. TrmB family.

It carries out the reaction guanosine(46) in tRNA + S-adenosyl-L-methionine = N(7)-methylguanosine(46) in tRNA + S-adenosyl-L-homocysteine. The protein operates within tRNA modification; N(7)-methylguanine-tRNA biosynthesis. Its function is as follows. Catalyzes the formation of N(7)-methylguanine at position 46 (m7G46) in tRNA. This chain is tRNA (guanine-N(7)-)-methyltransferase, found in Campylobacter jejuni (strain RM1221).